The chain runs to 822 residues: Calpain-3 (822 aa).

Residues 1-36 (MPTVISASVAPRTGAEPMSPGPIAQAAQDKGTEAGG) form a disordered region. The region spanning 74–418 (LFVDPEFPPD…FTKLEICNLT (345 aa)) is the Calpain catalytic domain. Catalysis depends on residues C129, H335, and N359. The segment at 419 to 587 (ADALESDKLQ…KRNLSEEVEN (169 aa)) is domain III. Residues 588 to 650 (TISVDRPVKK…EPGNTDQESE (63 aa)) form a linker region. Residues 604–652 (IFVSDRANSNKELGVDQETEEGKDNTSPDKQAKSPQLEPGNTDQESEEQ) form a disordered region. The segment covering 623–635 (EEGKDNTSPDKQA) has biased composition (basic and acidic residues). EF-hand domains follow at residues 650 to 684 (EEQR…VVNK), 693 to 726 (FTLE…KKIK), 723 to 758 (KKIK…AGFH), and 788 to 822 (VRLE…TMYA). The interval 651 to 822 (EQRQFRNIFR…LEWLQLTMYA (172 aa)) is domain IV. Ca(2+) contacts are provided by A663, D666, E668, E673, D706, D708, S710, R712, E717, D736, D738, S740, T742, E747, D801, D803, D805, and I807.

The protein belongs to the peptidase C2 family. In terms of assembly, homodimer; via EF-hand domain 4. Interacts with TTN/titin. Interacts with CMYA5; this interaction, which results in CMYA5 proteolysis, may protect CAPN3 from autolysis. Interacts with SIMC1. Interacts with UTP25; the interaction is required for CAPN3 translocation to the nucleolus. In terms of tissue distribution, skeletal muscle.

Its subcellular location is the cytoplasm. The protein resides in the nucleus. It localises to the nucleolus. The catalysed reaction is Broad endopeptidase activity.. With respect to regulation, activated by micromolar concentrations of calcium and inhibited by calpastatin. Calcium-regulated non-lysosomal thiol-protease. Proteolytically cleaves CTBP1. Mediates, with UTP25, the proteasome-independent degradation of p53/TP53. The sequence is that of Calpain-3 (CAPN3) from Bos taurus (Bovine).